Reading from the N-terminus, the 304-residue chain is Oxygen-dependent coproporphyrinogen-III oxidase (304 aa).

S93 is a substrate binding site. A divalent metal cation is bound by residues H97 and H107. H107 functions as the Proton donor in the catalytic mechanism. 109 to 111 (NVR) lines the substrate pocket. Positions 146 and 176 each coordinate a divalent metal cation. The segment at 241–276 (YVEFNLVYDRGTLFGLQSGGRTESILMSLPPQVRWG) is important for dimerization. A substrate-binding site is contributed by 259 to 261 (GGR).

Belongs to the aerobic coproporphyrinogen-III oxidase family. In terms of assembly, homodimer. A divalent metal cation is required as a cofactor.

It localises to the cytoplasm. The enzyme catalyses coproporphyrinogen III + O2 + 2 H(+) = protoporphyrinogen IX + 2 CO2 + 2 H2O. Its pathway is porphyrin-containing compound metabolism; protoporphyrin-IX biosynthesis; protoporphyrinogen-IX from coproporphyrinogen-III (O2 route): step 1/1. Functionally, involved in the heme biosynthesis. Catalyzes the aerobic oxidative decarboxylation of propionate groups of rings A and B of coproporphyrinogen-III to yield the vinyl groups in protoporphyrinogen-IX. The protein is Oxygen-dependent coproporphyrinogen-III oxidase of Pseudomonas syringae pv. tomato (strain ATCC BAA-871 / DC3000).